Consider the following 58-residue polypeptide: Large ribosomal subunit protein uL30 (58 aa).

The protein belongs to the universal ribosomal protein uL30 family. As to quaternary structure, part of the 50S ribosomal subunit.

The sequence is that of Large ribosomal subunit protein uL30 from Novosphingobium aromaticivorans (strain ATCC 700278 / DSM 12444 / CCUG 56034 / CIP 105152 / NBRC 16084 / F199).